Consider the following 413-residue polypeptide: L-arginine-specific L-amino acid ligase (413 aa).

The region spanning 115–312 (KTKLKMEGIP…LWESSLNISV (198 aa)) is the ATP-grasp domain. 141 to 202 (GEKLGWPIIV…EKCIEMEEFH (62 aa)) is a binding site for ATP. The Mg(2+) site is built by glutamate 268 and glutamate 281. Mn(2+) is bound by residues glutamate 268 and glutamate 281.

As to quaternary structure, homodimer. Mg(2+) is required as a cofactor. It depends on Mn(2+) as a cofactor. Requires Co(2+) as cofactor.

The enzyme catalyses an L-alpha-amino acid + L-arginine + ATP = L-arginyl-L-alpha-amino acid + ADP + phosphate + H(+). In terms of biological role, catalyzes the synthesis of Arg-Xaa dipeptides in an ATP-dependent manner. Has strict specificity toward arginine as the N-terminal substrate. The chain is L-arginine-specific L-amino acid ligase from Bacillus subtilis.